Consider the following 298-residue polypeptide: D-alanine--D-alanine ligase (298 aa).

Residues 97 to 290 form the ATP-grasp domain; that stretch reads FYSLFKNYIQ…FDELINIIIK (194 aa). 124–173 is a binding site for ATP; that stretch reads PFIIKPRKSGSSKGVYIIHNENEYKFYLEKDLKEFQEVLVQEYIKGREIT. Mg(2+) is bound by residues Asp245, Glu257, and Asn259.

The protein belongs to the D-alanine--D-alanine ligase family. Mg(2+) serves as cofactor. It depends on Mn(2+) as a cofactor.

It localises to the cytoplasm. It catalyses the reaction 2 D-alanine + ATP = D-alanyl-D-alanine + ADP + phosphate + H(+). It functions in the pathway cell wall biogenesis; peptidoglycan biosynthesis. Cell wall formation. This is D-alanine--D-alanine ligase from Petrotoga mobilis (strain DSM 10674 / SJ95).